Consider the following 277-residue polypeptide: Collectin-10 (277 aa).

Residues 1 to 27 form the signal peptide; it reads MNGFASLLRRNQFILLVLFLLQIQSLG. Positions 40-107 are disordered; it reads ATHTISPGPK…GDKGEKGLLG (68 aa). Basic and acidic residues predominate over residues 49-64; sequence KGDDGEKGDPGEEGKH. One can recognise a Collagen-like domain in the interval 53–112; sequence GEKGDPGEEGKHGKVGRMGPKGIKGELGDMGDQGNIGKTGPIGKKGDKGEKGLLGIPGEK. A C-type lectin domain is found at 155–271; it reads TEEKFYYIVQ…CHLTMYFVCE (117 aa). 2 disulfide bridges follow: cysteine 176–cysteine 270 and cysteine 248–cysteine 262. Residue asparagine 258 is glycosylated (N-linked (GlcNAc...) asparagine).

Belongs to the COLEC10/COLEC11 family. In terms of tissue distribution, highly expressed in liver, placenta and adrenal gland. Moderately expressed in small intestine, lung, stomach and prostate. Weakly expressed in trachea and spleen.

The protein localises to the secreted. Its subcellular location is the golgi apparatus. The protein resides in the cytoplasm. Lectin that binds to various sugars: galactose &gt; mannose = fucose &gt; N-acetylglucosamine &gt; N-acetylgalactosamine. Acts as a chemoattractant, probably involved in the regulation of cell migration. The polypeptide is Collectin-10 (COLEC10) (Homo sapiens (Human)).